Reading from the N-terminus, the 96-residue chain is Large ribosomal subunit protein uL23 (96 aa).

This sequence belongs to the universal ribosomal protein uL23 family. Part of the 50S ribosomal subunit. Contacts protein L29, and trigger factor when it is bound to the ribosome.

Its function is as follows. One of the early assembly proteins it binds 23S rRNA. One of the proteins that surrounds the polypeptide exit tunnel on the outside of the ribosome. Forms the main docking site for trigger factor binding to the ribosome. In Nitratidesulfovibrio vulgaris (strain ATCC 29579 / DSM 644 / CCUG 34227 / NCIMB 8303 / VKM B-1760 / Hildenborough) (Desulfovibrio vulgaris), this protein is Large ribosomal subunit protein uL23.